The chain runs to 134 residues: Phospholipase A2 (134 aa).

Residues Trp-8, Gly-10, and Gly-12 each coordinate Ca(2+). 5 disulfide bridges follow: Cys-9–Cys-31, Cys-30–Cys-70, Cys-37–Cys-63, Cys-61–Cys-95, and Cys-105–Cys-113. An N-linked (GlcNAc...) asparagine glycan is attached at Asn-13. His-34 is an active-site residue. Residue Asp-35 coordinates Ca(2+). The active site involves Asp-64.

Belongs to the phospholipase A2 family. Group III subfamily. The cofactor is Ca(2+). Expressed by the venom gland.

The protein resides in the secreted. It catalyses the reaction a 1,2-diacyl-sn-glycero-3-phosphocholine + H2O = a 1-acyl-sn-glycero-3-phosphocholine + a fatty acid + H(+). Functionally, PLA2 catalyzes the calcium-dependent hydrolysis of the 2-acyl groups in 3-sn-phosphoglycerides. This Apis dorsata (Giant honeybee) protein is Phospholipase A2.